A 254-amino-acid polypeptide reads, in one-letter code: Uracil-DNA glycosylase (254 aa).

The active-site Proton acceptor is Asp-91.

This sequence belongs to the uracil-DNA glycosylase (UDG) superfamily. UNG family.

It is found in the host nucleus. The enzyme catalyses Hydrolyzes single-stranded DNA or mismatched double-stranded DNA and polynucleotides, releasing free uracil.. Excises uracil residues from the DNA which can arise as a result of misincorporation of dUMP residues by DNA polymerase or deamination of cytosines. Therefore may reduce deleterious uracil incorporation into the viral genome, particularly in terminally differentiated cells which lack DNA repair enzymes. In Homo sapiens (Human), this protein is Uracil-DNA glycosylase (U81).